Reading from the N-terminus, the 451-residue chain is Chromosomal replication initiator protein DnaA (451 aa).

A domain I, interacts with DnaA modulators region spans residues 1 to 77; it reads MTENEQIFWN…EVYNAQISVD (77 aa). Residues 77–110 form a domain II region; that stretch reads DYVFEEDLMIEQNQTKINQKPKQQALNSLPTVTS. Positions 111–329 are domain III, AAA+ region; that stretch reads DLNPKYSFEN…GALKDISLVA (219 aa). Residues Gly155, Gly157, Lys158, and Thr159 each contribute to the ATP site. A domain IV, binds dsDNA region spans residues 330–451; that stretch reads NFKQIDTITV…EIETIKNKIK (122 aa).

The protein belongs to the DnaA family. As to quaternary structure, oligomerizes as a right-handed, spiral filament on DNA at oriC.

Its subcellular location is the cytoplasm. Functionally, plays an essential role in the initiation and regulation of chromosomal replication. ATP-DnaA binds to the origin of replication (oriC) to initiate formation of the DNA replication initiation complex once per cell cycle. Binds the DnaA box (a 9 base pair repeat at the origin) and separates the double-stranded (ds)DNA. Forms a right-handed helical filament on oriC DNA; dsDNA binds to the exterior of the filament while single-stranded (ss)DNA is stabiized in the filament's interior. The ATP-DnaA-oriC complex binds and stabilizes one strand of the AT-rich DNA unwinding element (DUE), permitting loading of DNA polymerase. After initiation quickly degrades to an ADP-DnaA complex that is not apt for DNA replication. Binds acidic phospholipids. The polypeptide is Chromosomal replication initiator protein DnaA (Streptococcus pyogenes serotype M4 (strain MGAS10750)).